The sequence spans 155 residues: Sec-independent protein translocase protein TatB (155 aa).

The helical transmembrane segment at 1-21 threads the bilayer; sequence MIDLGISKIALIGAVALIVIG. Disordered stretches follow at residues 81-103 and 131-155; these read ASDF…LPGF and SGIR…SRKA. Positions 89–98 are enriched in polar residues; sequence SETTGSTSSD.

This sequence belongs to the TatB family. As to quaternary structure, the Tat system comprises two distinct complexes: a TatABC complex, containing multiple copies of TatA, TatB and TatC subunits, and a separate TatA complex, containing only TatA subunits. Substrates initially bind to the TatABC complex, which probably triggers association of the separate TatA complex to form the active translocon.

It is found in the cell inner membrane. Its function is as follows. Part of the twin-arginine translocation (Tat) system that transports large folded proteins containing a characteristic twin-arginine motif in their signal peptide across membranes. Together with TatC, TatB is part of a receptor directly interacting with Tat signal peptides. TatB may form an oligomeric binding site that transiently accommodates folded Tat precursor proteins before their translocation. The protein is Sec-independent protein translocase protein TatB of Polaromonas naphthalenivorans (strain CJ2).